Here is a 549-residue protein sequence, read N- to C-terminus: Glucose-6-phosphate isomerase (549 aa).

The active-site Proton donor is the Glu-353. Catalysis depends on residues His-384 and Lys-513.

It belongs to the GPI family.

It localises to the cytoplasm. The catalysed reaction is alpha-D-glucose 6-phosphate = beta-D-fructose 6-phosphate. It functions in the pathway carbohydrate biosynthesis; gluconeogenesis. Its pathway is carbohydrate degradation; glycolysis; D-glyceraldehyde 3-phosphate and glycerone phosphate from D-glucose: step 2/4. Its function is as follows. Catalyzes the reversible isomerization of glucose-6-phosphate to fructose-6-phosphate. This is Glucose-6-phosphate isomerase from Brucella abortus (strain S19).